The primary structure comprises 736 residues: Sulfate transporter (736 aa).

The segment at Met-1–Arg-28 is disordered. A phosphoserine mark is found at Ser-12 and Ser-16. The next 2 helical transmembrane spans lie at Val-114–Leu-134 and Pro-139–Ser-159. 2 N-linked (GlcNAc...) asparagine glycosylation sites follow: Asn-201 and Asn-207. A run of 6 helical transmembrane segments spans residues Phe-229–Tyr-249, Gly-257–Leu-277, Leu-380–Val-400, Ala-422–Leu-442, Leu-457–Phe-477, and Leu-526–Leu-546. The STAS domain occupies Ala-570–Ala-721.

The protein belongs to the SLC26A/SulP transporter (TC 2.A.53) family. Post-translationally, N-glycosylated.

The protein resides in the cell membrane. The protein localises to the apical cell membrane. It carries out the reaction oxalate(in) + sulfate(out) = oxalate(out) + sulfate(in). The enzyme catalyses sulfate(out) + 2 chloride(in) = sulfate(in) + 2 chloride(out). The catalysed reaction is oxalate(out) + 2 chloride(in) = oxalate(in) + 2 chloride(out). It catalyses the reaction bromide(in) + chloride(out) = bromide(out) + chloride(in). It carries out the reaction nitrate(in) + chloride(out) = nitrate(out) + chloride(in). The enzyme catalyses iodide(in) + chloride(out) = iodide(out) + chloride(in). Functionally, sulfate transporter which mediates sulfate uptake into chondrocytes in order to maintain adequate sulfation of proteoglycans which is needed for cartilage development. Mediates electroneutral anion exchange of sulfate ions for oxalate ions, sulfate and oxalate ions for chloride and/or hydroxyl ions and chloride ions for bromide, iodide and nitrate ions. The coupling of sulfate transport to both hydroxyl and chloride ions likely serves to ensure transport at both acidic pH when most sulfate uptake is mediated by sulfate-hydroxide exchange and alkaline pH when most sulfate uptake is mediated by sulfate-chloride exchange. Essential for chondrocyte proliferation, differentiation and cell size expansion. In Equus caballus (Horse), this protein is Sulfate transporter (SLC26A2).